We begin with the raw amino-acid sequence, 568 residues long: 2-succinyl-5-enolpyruvyl-6-hydroxy-3-cyclohexene-1-carboxylate synthase (568 aa).

The protein belongs to the TPP enzyme family. MenD subfamily. In terms of assembly, homodimer. Mg(2+) serves as cofactor. The cofactor is Mn(2+). It depends on thiamine diphosphate as a cofactor.

It catalyses the reaction isochorismate + 2-oxoglutarate + H(+) = 5-enolpyruvoyl-6-hydroxy-2-succinyl-cyclohex-3-ene-1-carboxylate + CO2. Its pathway is quinol/quinone metabolism; 1,4-dihydroxy-2-naphthoate biosynthesis; 1,4-dihydroxy-2-naphthoate from chorismate: step 2/7. It functions in the pathway quinol/quinone metabolism; menaquinone biosynthesis. Its function is as follows. Catalyzes the thiamine diphosphate-dependent decarboxylation of 2-oxoglutarate and the subsequent addition of the resulting succinic semialdehyde-thiamine pyrophosphate anion to isochorismate to yield 2-succinyl-5-enolpyruvyl-6-hydroxy-3-cyclohexene-1-carboxylate (SEPHCHC). The polypeptide is 2-succinyl-5-enolpyruvyl-6-hydroxy-3-cyclohexene-1-carboxylate synthase (Haemophilus influenzae (strain PittGG)).